We begin with the raw amino-acid sequence, 787 residues long: Transcriptional corepressor LEUNIG_HOMOLOG (787 aa).

A required for SEU-binding region spans residues 1–88 (MAQSNWEADK…IEAQQGKAKE (88 aa)). The LisH domain occupies 8–40 (ADKMLDVYIYDYLVKKKLHNTAKSFMTEGKVSP). A coiled-coil region spans residues 77 to 106 (AYIEAQQGKAKEQQMQIQQLQMMRQAQMQR). The tract at residues 299–413 (NMTNSPMYGG…TPSTHTPVDG (115 aa)) is disordered. Composition is skewed to low complexity over residues 336–346 (SIGSPMQSSSS) and 355–372 (QQSSSQQQDHLLSQQSQQ). Positions 380-409 (PSSSGPANSTGTGNTVGPSNSQPSTPSTHT) are enriched in polar residues. 7 WD repeats span residues 508 to 547 (KSASKVICCSFSYDGKLLASAGHDKKVFIWNMETLQVEST), 550 to 589 (EHAHIITDVRFRPNSTQLATSSFDKTIKIWDASDPGYFLR), 593 to 633 (GHAA…VRAV), 635 to 671 (GASTQVRFQPRTGQFLAAASENTVSIFDIENNNKRVN), 675 to 715 (GHSS…HELS), 717 to 755 (SGNKFHSVVFHPSYPDLLVIGGYQAIELWNTMENKCMTV), and 757 to 787 (GHECVISALAQSPSTGVVASASHDKSVKIWK).

Forms corepressor complexes with SLK1 and SLK2; LUH is the transcription repressor subunit and SLK1 and SLK2 the specific DNA-binding adapters. Interacts with SEU. Binds to YAB3, YAB5 and YAB1/FIL; these complexes promote adaxial cell identity in leaves as well as embryonic shoot apical meristem (SAM) initiation and postembryonic SAM maintenance. As to expression, expressed in roots, stems, leaves, seedlings, apex, flowers, siliques, flower organs and seeds (including seed coat).

It is found in the nucleus. Its function is as follows. Transcription repressor subunit of the SEU-SLK1 and SEU-SLK2 transcriptional corepressor of abiotic stress (e.g. salt and osmotic stress) response genes, by means of an epigenetic process involving histone modification (e.g. H3K9 and H3K14 acetylation), probably by recruiting HDAC, to facilitate the condensation of chromatin thus preventing transcription at the target genes. Can also act as a transcription activator. Implicated in embryo and floral development. Involved in post-synthesis cell wall modifications necessary for mucilage extrusion from seeds upon imbibition, probably by promoting the expression of genes required for mucilage maturation (e.g. MUM2). Regulates the maintenance on leaf polarity and meristem activity as well as the initiation of embryonic shoot apical meristem (SAM) development. The sequence is that of Transcriptional corepressor LEUNIG_HOMOLOG from Arabidopsis thaliana (Mouse-ear cress).